Here is a 278-residue protein sequence, read N- to C-terminus: Sulfide dehydrogenase subunit beta (278 aa).

Residues 1–4 constitute a propeptide that is removed on maturation; sequence MFKI. The region spanning 1-95 is the FAD-binding FR-type domain; that stretch reads MFKILRKERL…LGPLGKPSHI (95 aa). The [2Fe-2S] cluster site is built by Cys222, Cys225, and Cys237.

As to quaternary structure, heterodimer of alpha and beta subunits. It depends on FAD as a cofactor. Requires [2Fe-2S] cluster as cofactor.

The protein localises to the cytoplasm. It carries out the reaction n sulfur + hydrogen sulfide + NADP(+) = (n+1) sulfur + NADPH. It catalyses the reaction 2 reduced [2Fe-2S]-[ferredoxin] + NADP(+) + H(+) = 2 oxidized [2Fe-2S]-[ferredoxin] + NADPH. Its function is as follows. A bifunctional enzyme that catalyzes the reduction of elemental sulfur or polysulfide to hydrogen sulfide with NADPH as electron donor. Also functions as a reduced ferredoxin:NADP oxidoreductase with a very high affinity for reduced ferredoxin. Exhibits a broad specificity for various physiological and non-physiological substrates with varied reduction potentials such as methyl viologen, benzyl viologen, FAD, FMN, methylene blue, 2,6-dichlorophenolindophenol (DCIP), cytochrome C and ferricyanide with highest preference for benzyl viologen. Does not reduce fumarate, succinate, nitrate, nitrite, sulfate, sulfite or protons. Does not possess any hydrogenase activity or NADPH-dependent glutamate synthase activity. In Pyrococcus furiosus (strain ATCC 43587 / DSM 3638 / JCM 8422 / Vc1), this protein is Sulfide dehydrogenase subunit beta.